The following is a 492-amino-acid chain: MLLLGVLLLTVLAGARLLWGKWKLRGLHLPPLVPGCLHLLQPDLPLHLLGLTQKLGPIYRLRLGLQDVVVLNSKRTIEEAMVRKWVDFAGRPQTPSYKLVSLHHQDLSLGDYSLLWKAHKKLTRSALLLGIRSSMEPLVEQLTQEFCERMRAQAGTPVAIQKEFSLLTCAIICHLTFGDKEDTLVHTFHDCVQDLMRTWEHWSIQMLDIIPFLRFFPNPGLWRLKRALENRDHIVEKQLRQHKESMVAGQWRDMTDYMLQRVGRLRAEEGCGQLLEGHVHMSVVDLFIGGTETTATTLSWAVAFLLHHPEIQQRLQEELDRELGPGASGSRIPYRDPTRLPLLSATVAEVLRLRPVVPLALPHCTTRPSSISGYDIPEGMVVIPNLQGAHLDETVWERPQEFRPDRFLVPGASPRVLAFGCGARVCLGEPLARLELLVVLAQLLRAFTLMPAAGTLPSLRPRARCGVNLSMQPFQVQLQPRGAGVLGRGQHP.

The heme b site is built by Arg91 and Lys120. Arg231 contacts 17alpha-hydroxyprogesterone. Arg231 serves as a coordination point for progesterone. Heme b is bound by residues His363, Arg424, and Cys426.

This sequence belongs to the cytochrome P450 family. Requires heme b as cofactor.

The protein resides in the endoplasmic reticulum membrane. It is found in the microsome membrane. The enzyme catalyses 17alpha-hydroxyprogesterone + reduced [NADPH--hemoprotein reductase] + O2 = 11-deoxycortisol + oxidized [NADPH--hemoprotein reductase] + H2O + H(+). The catalysed reaction is progesterone + reduced [NADPH--hemoprotein reductase] + O2 = 21-hydroxyprogesterone + oxidized [NADPH--hemoprotein reductase] + H2O + H(+). Specifically catalyzes the 21-hydroxylation of steroids. Required for the adrenal synthesis of mineralocorticoids and glucocorticoids. The protein is Steroid 21-hydroxylase (CYP21) of Canis lupus familiaris (Dog).